A 522-amino-acid chain; its full sequence is Light-independent protochlorophyllide reductase subunit B (522 aa).

D36 serves as a coordination point for [4Fe-4S] cluster. D290 functions as the Proton donor in the catalytic mechanism. A substrate-binding site is contributed by 425 to 426 (GL).

It belongs to the ChlB/BchB/BchZ family. In terms of assembly, protochlorophyllide reductase is composed of three subunits; ChlL, ChlN and ChlB. Forms a heterotetramer of two ChlB and two ChlN subunits. Requires [4Fe-4S] cluster as cofactor.

The enzyme catalyses chlorophyllide a + oxidized 2[4Fe-4S]-[ferredoxin] + 2 ADP + 2 phosphate = protochlorophyllide a + reduced 2[4Fe-4S]-[ferredoxin] + 2 ATP + 2 H2O. The protein operates within porphyrin-containing compound metabolism; chlorophyll biosynthesis (light-independent). Its function is as follows. Component of the dark-operative protochlorophyllide reductase (DPOR) that uses Mg-ATP and reduced ferredoxin to reduce ring D of protochlorophyllide (Pchlide) to form chlorophyllide a (Chlide). This reaction is light-independent. The NB-protein (ChlN-ChlB) is the catalytic component of the complex. The chain is Light-independent protochlorophyllide reductase subunit B from Synechococcus sp. (strain CC9311).